The primary structure comprises 162 residues: Selenoprotein F (162 aa).

The signal sequence occupies residues 1–28; it reads MAARRDGWLGPAFGLRLLLATVLQTVSA. A non-standard amino acid (selenocysteine) is located at residue U93.

Belongs to the selenoprotein M/F family. As to quaternary structure, forms a tight complex with UGGT1/UGCGL1. Interacts with UGGT2/UGCGL2. Interacts with RDH11.

The protein localises to the endoplasmic reticulum lumen. May be involved in redox reactions associated with the formation of disulfide bonds. May contribute to the quality control of protein folding in the endoplasmic reticulum. May regulate protein folding by enhancing the catalytic activity of UGGT1/UGCGL1 and UGGT2/UGCGL2. This Bos taurus (Bovine) protein is Selenoprotein F.